Reading from the N-terminus, the 97-residue chain is NELL2-interacting cell ontogeny regulator 1 (97 aa).

The first 35 residues, 1 to 35 (MAPLPPCGPPRSPPPRLLLLLLLLSATLLGAPARA), serve as a signal peptide directing secretion.

Belongs to the NICOL family. As to quaternary structure, interacts with NELL2; triggers epididymal differentiation. Interacts with cell surface receptor TFRC; the interaction mediates uptake of NICOL1 into fibroblasts.

It localises to the secreted. The protein localises to the cytoplasm. Its subcellular location is the perinuclear region. In terms of biological role, mRNA-binding protein which interacts with a range of target mRNAs including SERPINE1, ACTA2, CCN2 and COL4A1 and may promote extracellular matrix production. Binds to the 3'-UTR of SERPINE1 mRNA and stabilizes the mRNA, possibly by competing for binding with SERBP1 and preventing SERBP1-mediated mRNA degradation. Also binds to the 3'-UTR of ACTA2. Testis-derived lumicrine factor that triggers epididymal differentiation and sperm maturation. This is NELL2-interacting cell ontogeny regulator 1 from Bos taurus (Bovine).